The sequence spans 345 residues: Phosphate acyltransferase (345 aa).

It belongs to the PlsX family. As to quaternary structure, homodimer. Probably interacts with PlsY.

Its subcellular location is the cytoplasm. It catalyses the reaction a fatty acyl-[ACP] + phosphate = an acyl phosphate + holo-[ACP]. It functions in the pathway lipid metabolism; phospholipid metabolism. Catalyzes the reversible formation of acyl-phosphate (acyl-PO(4)) from acyl-[acyl-carrier-protein] (acyl-ACP). This enzyme utilizes acyl-ACP as fatty acyl donor, but not acyl-CoA. In Photorhabdus laumondii subsp. laumondii (strain DSM 15139 / CIP 105565 / TT01) (Photorhabdus luminescens subsp. laumondii), this protein is Phosphate acyltransferase.